The chain runs to 167 residues: Protein tyrosine phosphatase type IVA 2 (167 aa).

Residues 5–158 enclose the Tyrosine-protein phosphatase domain; it reads APVEISYENM…YRPKMRLRFR (154 aa). A disulfide bond links Cys-46 and Cys-101. Asp-69 functions as the Proton donor in the catalytic mechanism. The active-site Phosphocysteine intermediate is Cys-101. 102-107 provides a ligand contact to phosphate; the sequence is VAGLGR. Arg-107 contributes to the substrate binding site. Cys-164 bears the Cysteine methyl ester mark. Cys-164 carries the S-farnesyl cysteine lipid modification. Positions 165 to 167 are cleaved as a propeptide — removed in mature form; the sequence is CVQ.

The protein belongs to the protein-tyrosine phosphatase family. As to quaternary structure, in contrast to PTP4A1 and PTP4A3, does not interact with tubulin. Interacts with RABGGTB. Post-translationally, farnesylated. Farnesylation is required for membrane targeting and for interaction with RABGGTB. As to expression, expressed in skeletal muscle, and at lower levels in liver, lung, heart, kidney, brain, testis and spleen.

Its subcellular location is the cell membrane. It localises to the early endosome. The protein resides in the cytoplasm. It carries out the reaction O-phospho-L-tyrosyl-[protein] + H2O = L-tyrosyl-[protein] + phosphate. Inhibited by sodium orthovanadate and pentamidine. Protein tyrosine phosphatase which stimulates progression from G1 into S phase during mitosis. Inhibits geranylgeranyl transferase type II activity by blocking the association between RABGGTA and RABGGTB. In Mus musculus (Mouse), this protein is Protein tyrosine phosphatase type IVA 2 (Ptp4a2).